The sequence spans 177 residues: Cell division inhibitor SulA (177 aa).

The segment at 112–118 is ftsZ binding; it reads ALASGNY. Positions 170 to 177 are lon protease binding; sequence KIHSIHYH.

The protein belongs to the SulA family. Interacts with FtsZ. Post-translationally, is rapidly cleaved and degraded by the Lon protease once DNA damage is repaired.

Its function is as follows. Component of the SOS system and an inhibitor of cell division. Accumulation of SulA causes rapid cessation of cell division and the appearance of long, non-septate filaments. In the presence of GTP, binds a polymerization-competent form of FtsZ in a 1:1 ratio, thus inhibiting FtsZ polymerization and therefore preventing it from participating in the assembly of the Z ring. This mechanism prevents the premature segregation of damaged DNA to daughter cells during cell division. The protein is Cell division inhibitor SulA of Photorhabdus laumondii subsp. laumondii (strain DSM 15139 / CIP 105565 / TT01) (Photorhabdus luminescens subsp. laumondii).